Here is a 503-residue protein sequence, read N- to C-terminus: Probable DNA ligase (503 aa).

Glu-210 contributes to the ATP binding site. The active-site N6-AMP-lysine intermediate is the Lys-212. Residues Arg-217, Arg-232, Glu-261, Phe-296, Arg-367, and Lys-373 each contribute to the ATP site.

This sequence belongs to the ATP-dependent DNA ligase family. The cofactor is Mg(2+).

It catalyses the reaction ATP + (deoxyribonucleotide)n-3'-hydroxyl + 5'-phospho-(deoxyribonucleotide)m = (deoxyribonucleotide)n+m + AMP + diphosphate.. DNA ligase that seals nicks in double-stranded DNA during DNA replication, DNA recombination and DNA repair. This is Probable DNA ligase from Rhodococcus opacus (strain B4).